The chain runs to 316 residues: MTMYVKSNTTGKDMLSLLEWNKEELIDIIKLAVAMKTNPAHYSHILSGKILGMIFDKPSTRTRVSFEAGILQLGGQAIVMSSKELQIGRGEPIKDTAHVMSEYIDAIMIRTFSHEKVEELAYHAEIPIINGLTDLHHPCQALADLMTIYEWKDQLEGVKLAYIGDGNNVCHSLLLAGAMVGLDIRLAMPKGYEVDETILATAENLAKESGAKIFVTEDPKHAVTDADFIYTDVWTSMGQEEENAKRLADFGEKYQVNAELASIAKPDYHFLHCLPAHREEEVTAEIIDGNHSVIYQQAGNRLHAQKALLAAILEAK.

Residues S59–T62, Q86, R110, and H137–Q140 contribute to the carbamoyl phosphate site. Residues N168, D232, and S236 to M237 contribute to the L-ornithine site. Residues C273–L274 and R301 each bind carbamoyl phosphate.

This sequence belongs to the aspartate/ornithine carbamoyltransferase superfamily. OTCase family.

The protein localises to the cytoplasm. It catalyses the reaction carbamoyl phosphate + L-ornithine = L-citrulline + phosphate + H(+). Its pathway is amino-acid biosynthesis; L-arginine biosynthesis; L-arginine from L-ornithine and carbamoyl phosphate: step 1/3. In terms of biological role, reversibly catalyzes the transfer of the carbamoyl group from carbamoyl phosphate (CP) to the N(epsilon) atom of ornithine (ORN) to produce L-citrulline. The polypeptide is Ornithine carbamoyltransferase (Listeria innocua serovar 6a (strain ATCC BAA-680 / CLIP 11262)).